A 288-amino-acid chain; its full sequence is MQVIIISGLSGSGKSIALKVLEDSGYYCVDNLPASLLVVLINHLQTQQHAYVAVAIDMRSGENITVLPWQLKMIDKSIQIKFIFLEARTETLMQRFSETRRRHPLSDKNITLEEAIRREREALATLTGLGHHIDTSSLRPNVLRAFIKDFIADSRSPSQLTLLFQSFGYKHGIPLDADLVFDIRCLPNPFYDPQLKELTGHDPEVIRFMESQPDASKMLRDISSFLGTWLPAYIRDNRAYLTVAIGCTGGQHRSVYFAEKLALHFHDSAHVLVRHRGLAEYKPHYARR.

Residue Gly8–Ser15 participates in ATP binding. Asp57–Ser60 lines the GTP pocket.

This sequence belongs to the RapZ-like family.

Displays ATPase and GTPase activities. This chain is Nucleotide-binding protein NE1849, found in Nitrosomonas europaea (strain ATCC 19718 / CIP 103999 / KCTC 2705 / NBRC 14298).